The following is a 116-amino-acid chain: Acyl-CoA-binding protein homolog 3 (116 aa).

The ACB domain occupies 3 to 92 (LQEKFDAAVE…LNDMFDKIAE (90 aa)). Residues 34–38 (YSLFK), Lys-60, and Tyr-79 each bind an acyl-CoA.

The protein belongs to the ACBP family.

Functionally, binds medium- and long-chain acyl-CoA esters with very high affinity and may function as an intracellular carrier of acyl-CoA esters. The protein is Acyl-CoA-binding protein homolog 3 (acbp-3) of Caenorhabditis elegans.